The primary structure comprises 103 residues: Histone H4 (103 aa).

Over residues Met-1–Gly-14 the composition is skewed to gly residues. A disordered region spans residues Met-1 to Arg-20. Position 6 is an N6-acetyl-N6-methyllysine; alternate (Lys-6). Residues Lys-6, Lys-9, and Lys-13 each carry the N6-methyllysine; alternate modification. The residue at position 13 (Lys-13) is an N6-acetyl-N6-methyllysine; alternate. The DNA-binding element occupies Lys-17–Lys-21. Lys-92 carries the post-translational modification N6-glutaryllysine.

This sequence belongs to the histone H4 family. As to quaternary structure, the nucleosome is a histone octamer containing two molecules each of H2A, H2B, H3 and H4 assembled in one H3-H4 heterotetramer and two H2A-H2B heterodimers. The octamer wraps approximately 147 bp of DNA. Post-translationally, glutarylation at Lys-92 (H4K91glu) destabilizes nucleosomes by promoting dissociation of the H2A-H2B dimers from nucleosomes.

It localises to the nucleus. It is found in the chromosome. In terms of biological role, core component of nucleosome. Nucleosomes wrap and compact DNA into chromatin, limiting DNA accessibility to the cellular machineries which require DNA as a template. Histones thereby play a central role in transcription regulation, DNA repair, DNA replication and chromosomal stability. DNA accessibility is regulated via a complex set of post-translational modifications of histones, also called histone code, and nucleosome remodeling. This Neurospora crassa (strain ATCC 24698 / 74-OR23-1A / CBS 708.71 / DSM 1257 / FGSC 987) protein is Histone H4 (hH4-1).